A 469-amino-acid polypeptide reads, in one-letter code: MAQGNNYGQTSNGVADESPNMLVYRKMEDVIARMQDEKNGIPIRTVKSFLSKIPSVFSGSDIVQWLIKNLTIEDPVEALHLGTLMAAHGYFFPISDHVLTLKDDGTFYRFQTPYFWPSNCWEPENTDYAVYLCKRTMQNKARLELADYEAESLARLQRAFARKWEFIFMQAEAQAKVDKKRDKIERKILDSQERAFWDVHRPVPGCVNTTEVDIKKSSRMRNPHKTRKSVYGLQNDIRSHSPTHTPTPETKPPTEDELHQQIKYWQIQLDRHRLKMSKVADSLLSYTEQYVEYDPFLVPPDPSNPWLSDDTTFWELEASKEPSQQRVKRWGFGMDEALKDPVGREQFLKFLESEFSSENLRFWLAVEDLKRRPIREVPSRVQEIWQEFLAPGAPSAINLDSKSYDKTTQNVKEPGRYTFEDAQEHIYKLMKSDSYPRFIRSSAYQELLQAKRKGKTLTSKRLTSLVQSY.

The DEP domain maps to 37 to 112; the sequence is EKNGIPIRTV…DDGTFYRFQT (76 aa). Residues Ser-229 and Ser-241 each carry the phosphoserine modification. Residues 236–255 are disordered; the sequence is DIRSHSPTHTPTPETKPPTE. Thr-243 carries the phosphothreonine modification. A G protein gamma domain is found at 255-316; sequence EDELHQQIKY…LSDDTTFWEL (62 aa). The RGS domain occupies 333-448; it reads GMDEALKDPV…IRSSAYQELL (116 aa). Ser-434 carries the post-translational modification Phosphoserine.

As to quaternary structure, interacts with GNB5, forming the RGS7-GNB5 complex. Interacts with GPR158; promotes the GTPase activator activity of the RGS7-GNB5 complex in absence of glycine, in contrast GTPase activator activity of the RGS7-GNB5 complex is inhibited in presence of glycine. Interacts with GPR179. Interacts with PKD1; this prevents rapid proteasomal degradation. Interacts with RGS7BP, leading to regulate the subcellular location of the heterodimer formed with GNB5. Interacts (phosphorylated form) with 14-3-3 protein YWHAQ. Interacts with SNAPIN. Interacts with GNAI1. Interacts with GNAO1, GNAI3 and GNAZ. In terms of processing, palmitoylated. Ubiquitinated, leading to rapid proteasomal degradation. Post-translationally, phosphorylation and subsequent interaction with 14-3-3 proteins inhibits GAP activity. As to expression, detected in brain (at protein level).

The protein resides in the cytoplasm. It is found in the cytosol. It localises to the cell membrane. Its subcellular location is the membrane. In terms of biological role, GTPase activator component of the RGS7-GNB5 complex that regulates G protein-coupled receptor signaling cascades. The RGS7-GNB5 complex acts as an inhibitor signal transduction by promoting the GTPase activity of G protein alpha subunits, such as GNAO1, thereby driving them into their inactive GDP-bound form. May play a role in synaptic vesicle exocytosis. Glycine-dependent regulation of the RGS7-GNB5 complex by GPR158 affects mood and cognition via its ability to regulate neuronal excitability in L2/L3 pyramidal neurons of the prefrontal cortex. Modulates the activity of potassium channels that are activated by GNAO1 in response to muscarinic acetylcholine receptor M2/CHRM2 signaling. The chain is Regulator of G-protein signaling 7 (Rgs7) from Mus musculus (Mouse).